We begin with the raw amino-acid sequence, 157 residues long: Small ribosomal subunit protein uS7 (157 aa).

The protein belongs to the universal ribosomal protein uS7 family. Part of the 30S ribosomal subunit. Contacts proteins S9 and S11.

In terms of biological role, one of the primary rRNA binding proteins, it binds directly to 16S rRNA where it nucleates assembly of the head domain of the 30S subunit. Is located at the subunit interface close to the decoding center, probably blocks exit of the E-site tRNA. The protein is Small ribosomal subunit protein uS7 of Verminephrobacter eiseniae (strain EF01-2).